The following is a 305-amino-acid chain: Cytochrome c biogenesis protein CcsA (305 aa).

8 consecutive transmembrane segments (helical) span residues 4–24, 32–52, 58–78, 91–111, 136–156, 212–232, 246–263, and 275–295; these read VLGLGLFAFALLLLALPLAFW, SGLVTLLIATANLALTAQLVL, GHFPISNLYESLCFLAWACTL, IVAAAATPMGLGCIAFASFAL, VIMVSYAALLVGSLLSVAVLV, TITVGFLLLTVGIISGAVWAN, TWALICWLVYAAYLHTRL, and VASAGLVVIGVCYIGVNLLGI.

Belongs to the CcmF/CycK/Ccl1/NrfE/CcsA family. As to quaternary structure, may interact with ccs1.

It localises to the cellular thylakoid membrane. Required during biogenesis of c-type cytochromes (cytochrome c6 and cytochrome f) at the step of heme attachment. The sequence is that of Cytochrome c biogenesis protein CcsA from Synechococcus sp. (strain CC9311).